A 400-amino-acid chain; its full sequence is Delta(12) fatty acid desaturase (400 aa).

The helical transmembrane segment at 91-111 (LAWPAYWIMQGIVCTGIWVLA) threads the bilayer. Residues 112–116 (HECGH) carry the Histidine box-1 motif. A Histidine box-2 motif is present at residues 148–152 (HSKHH). 3 helical membrane passes run 199–219 (IVTL…YLIM), 245–265 (FFDI…LIYA), and 277–297 (YYII…FLQH). The Histidine box-3 motif lies at 339–343 (HVAHH).

The protein belongs to the fatty acid desaturase type 1 family.

The protein localises to the membrane. The catalysed reaction is (9Z)-octadecenoyl-CoA + 2 Fe(II)-[cytochrome b5] + O2 + 2 H(+) = (9Z,12Z)-octadecadienoyl-CoA + 2 Fe(III)-[cytochrome b5] + 2 H2O. It catalyses the reaction (9Z)-hexadecenoyl-CoA + 2 Fe(II)-[cytochrome b5] + O2 + 2 H(+) = (9Z,12Z)-hexadecadienoyl-CoA + 2 Fe(III)-[cytochrome b5] + 2 H2O. It participates in lipid metabolism; polyunsaturated fatty acid biosynthesis. In terms of biological role, catalyzes the desaturation of oleic acid (Delta(9)-18:1) to linoleic acid (Delta(9), Delta(12)-18:2). This is Delta(12) fatty acid desaturase from Mortierella isabellina (Filamentous fungus).